A 734-amino-acid polypeptide reads, in one-letter code: Photosystem I P700 chlorophyll a apoprotein A2 (734 aa).

8 consecutive transmembrane segments (helical) span residues 46-69 (IFASHFGQLAIIFLWTSGNLFHVA), 135-158 (LYTGALFLLFLSAISLIAGWLHLQ), 175-199 (LNHHLSGLFGVSSLAWTGHLVHVAI), 273-291 (IAHHHLAIAFVFLVAGHMY), 330-353 (IHFQLGLALASLGVITSLVAQHMY), 369-395 (AALYTHHQYIAGFIMTGAFAHGAIFFI), 417-439 (AIKSHLSWASLFLGFHTLGLYVH), and 517-535 (FLVHHAIALGLHTTTLILV). 2 residues coordinate [4Fe-4S] cluster: cysteine 559 and cysteine 568. The next 2 membrane-spanning stretches (helical) occupy residues 575 to 596 (AFYLAVFWMLNTIGWVTFYWHW) and 643 to 665 (LSVWAWMFLFGHLVWATGFMFLI). Positions 654, 662, and 670 each coordinate chlorophyll a. Tryptophan 671 provides a ligand contact to phylloquinone. The chain crosses the membrane as a helical span at residues 707–727 (LVGLAHFSVGYIFTYAAFLIA).

This sequence belongs to the PsaA/PsaB family. The PsaA/B heterodimer binds the P700 chlorophyll special pair and subsequent electron acceptors. PSI consists of a core antenna complex that captures photons, and an electron transfer chain that converts photonic excitation into a charge separation. The eukaryotic PSI reaction center is composed of at least 11 subunits. The cofactor is P700 is a chlorophyll a/chlorophyll a' dimer, A0 is one or more chlorophyll a, A1 is one or both phylloquinones and FX is a shared 4Fe-4S iron-sulfur center..

The protein resides in the plastid. It localises to the chloroplast thylakoid membrane. The enzyme catalyses reduced [plastocyanin] + hnu + oxidized [2Fe-2S]-[ferredoxin] = oxidized [plastocyanin] + reduced [2Fe-2S]-[ferredoxin]. Functionally, psaA and PsaB bind P700, the primary electron donor of photosystem I (PSI), as well as the electron acceptors A0, A1 and FX. PSI is a plastocyanin-ferredoxin oxidoreductase, converting photonic excitation into a charge separation, which transfers an electron from the donor P700 chlorophyll pair to the spectroscopically characterized acceptors A0, A1, FX, FA and FB in turn. Oxidized P700 is reduced on the lumenal side of the thylakoid membrane by plastocyanin. The polypeptide is Photosystem I P700 chlorophyll a apoprotein A2 (Illicium oligandrum (Star anise)).